A 217-amino-acid chain; its full sequence is Dephospho-CoA kinase (217 aa).

Residues 2–217 (VIGLTGGIAS…RELARIEEQK (216 aa)) form the DPCK domain. 10–15 (ASGKST) is a binding site for ATP.

This sequence belongs to the CoaE family.

The protein localises to the cytoplasm. The catalysed reaction is 3'-dephospho-CoA + ATP = ADP + CoA + H(+). Its pathway is cofactor biosynthesis; coenzyme A biosynthesis; CoA from (R)-pantothenate: step 5/5. Its function is as follows. Catalyzes the phosphorylation of the 3'-hydroxyl group of dephosphocoenzyme A to form coenzyme A. The sequence is that of Dephospho-CoA kinase from Lactococcus lactis subsp. lactis (strain IL1403) (Streptococcus lactis).